Consider the following 290-residue polypeptide: TP53-target gene 5 protein (290 aa).

The span at 1–13 (MSPSAKKRPKNSR) shows a compositional bias: basic residues. Disordered stretches follow at residues 1–29 (MSPS…TEQP) and 114–178 (KLES…RQPL). 3 stretches are compositionally biased toward basic and acidic residues: residues 16–26 (KMQDEKLRDET), 114–130 (KLES…KEWK), and 138–167 (RNKE…RDDS).

Interacts with p53/TP53. Highly expressed in heart, brain and small intestine. Less abundant in skeletal muscle, spleen, prostate, ovary and colon. A smaller transcript is expressed specifically in the testis.

Its subcellular location is the cytoplasm. The protein localises to the nucleus. May play a significant role in p53/TP53-mediating signaling pathway. The sequence is that of TP53-target gene 5 protein (TP53TG5) from Homo sapiens (Human).